The chain runs to 1067 residues: [F-actin]-monooxygenase MICAL1 (1067 aa).

The tract at residues 1 to 489 (MASPTSTNPA…RDLYDVLAKE (489 aa)) is monooxygenase domain. Residues cysteine 95, 114-116 (EKR), 121-123 (RHN), phenylalanine 181, tyrosine 293, and aspartate 393 contribute to the FAD site. Position 475 is a phosphothreonine (threonine 475). A Calponin-homology (CH) domain is found at 508 to 612 (AGTQEELLRW…YLSHFHSAFK (105 aa)). Serine 617 bears the Phosphoserine mark. Positions 645 to 688 (SRAKENAEDAGGKKLRLEMEAETPSTEVPPDPEPGVPLTPPSQH) are disordered. Residues 646 to 663 (RAKENAEDAGGKKLRLEM) show a composition bias toward basic and acidic residues. Residues 646–666 (RAKENAEDAGGKKLRLEMEAE) adopt a coiled-coil conformation. Over residues 671-684 (EVPPDPEPGVPLTP) the composition is skewed to pro residues. Positions 695 to 757 (DLCALCGEHL…LQHLPQTDHK (63 aa)) constitute an LIM zinc-binding domain. Zn(2+)-binding residues include cysteine 697, cysteine 700, histidine 718, cysteine 721, cysteine 724, cysteine 727, cysteine 747, and histidine 750. Basic and acidic residues predominate over residues 755–766 (DHKAEGSDRGPE). Disordered regions lie at residues 755–838 (DHKA…RSCS) and 867–886 (KEEKESPFSSEEEEEDVPLD). Over residues 773–789 (PSENSMPPGLSTPTASQ) the composition is skewed to polar residues. Serine 872, serine 875, and serine 876 each carry phosphoserine. The span at 876-886 (SEEEEEDVPLD) shows a compositional bias: acidic residues. The tract at residues 901–1067 (GTMNNYPTWR…ELALGTGAQG (167 aa)) is important for interaction with RAB8A. The 150-residue stretch at 918 to 1067 (KEEEMKRFCK…ELALGTGAQG (150 aa)) folds into the bMERB domain. Coiled coils occupy residues 919–962 (EEEM…QSSS) and 999–1027 (NLEEKQWQLDQELRGYMNREENLKTAADR). Phosphoserine is present on serine 1057.

Belongs to the Mical family. Interacts with STK38 and STK38L. Interacts with RAB1B, RAB8A, RAB10, RAB13, RAB15 and RAB35 (in their GTP-bound forms); binding to RAB1B is of low affinity compared to other Rab proteins; at least in case of RAB8A and RAB10 can bind 2 molecules of the Rab proteins simultaneously; ternary complex formation of RAB8A, RAB13 and MICAL1 is possible. Associates with the SH3 domain of NEDD9. Interacts with VIM and PLXNA3. Interacts with GRAF1/ARHGAP26, GRAF2/ARHGAP10, RAB8A, RAB8B and RAB10; may bind simultaneously to GRAFs and Rabs and connects GRAFs to Rabs. Does not interact with RAB1 and RAB11A. It depends on FAD as a cofactor. As to expression, expressed in the thymus, lung, spleen, kidney, testis and hematopoietic cells.

The protein resides in the cytoplasm. Its subcellular location is the cytoskeleton. It localises to the endosome membrane. The protein localises to the midbody. It catalyses the reaction L-methionyl-[F-actin] + NADPH + O2 + H(+) = L-methionyl-(R)-S-oxide-[F-actin] + NADP(+) + H2O. The enzyme catalyses NADPH + O2 + H(+) = H2O2 + NADP(+). In terms of biological role, monooxygenase that promotes depolymerization of F-actin by mediating oxidation of specific methionine residues on actin to form methionine-sulfoxide, resulting in actin filament disassembly and preventing repolymerization. In the absence of actin, it also functions as a NADPH oxidase producing H(2)O(2). Acts as a cytoskeletal regulator that connects NEDD9 to intermediate filaments. Also acts as a negative regulator of apoptosis via its interaction with STK38 and STK38L; acts by antagonizing STK38 and STK38L activation by MST1/STK4. Involved in regulation of lamina-specific connectivity in the nervous system such as the development of lamina-restricted hippocampal connections. Through redox regulation of the actin cytoskeleton controls the intracellular distribution of secretory vesicles containing L1/neurofascin/NgCAM family proteins in neurons, thereby regulating their cell surface levels. May act as Rab effector protein and play a role in vesicle trafficking. Promotes endosomal tubule extension by associating with RAB8 (RAB8A or RAB8B), RAB10 and GRAF (GRAF1/ARHGAP26 or GRAF2/ARHGAP10) on the endosomal membrane which may connect GRAFs to Rabs, thereby participating in neosynthesized Rab8-Rab10-Rab11-dependent protein export. The polypeptide is [F-actin]-monooxygenase MICAL1 (MICAL1) (Homo sapiens (Human)).